Consider the following 1692-residue polypeptide: Tyrosine-protein phosphatase non-receptor type 23 (1692 aa).

Residues 8–394 (PMIWLDLKEA…AKIEDKNEVL (387 aa)) enclose the BRO1 domain. TPR repeat units lie at residues 250–283 (AVAHLHMGKQAEEQQKFGERVAYFQSALDKLNEA) and 374–407 (EEKAKLLREMLAKIEDKNEVLDQFMDSMQLDPET). The stretch at 552–639 (KAVLQNLKRI…RALTEANVQY (88 aa)) forms a coiled coil. Disordered regions lie at residues 711-788 (DREL…PATH), 884-923 (DSVQAPISSHTAPRPNPTPALPQPCFPVPQPVPQSVPQPQ), and 944-1199 (TYSI…LLQP). A Phosphothreonine modification is found at Thr-744. The his stretch occupies residues 773-1186 (HFSPGPFPSS…SSSPESQHGG (414 aa)). Residues 774-785 (FSPGPFPSSTGP) show a composition bias toward low complexity. The span at 884 to 894 (DSVQAPISSHT) shows a compositional bias: polar residues. A compositionally biased stretch (pro residues) spans 897-923 (RPNPTPALPQPCFPVPQPVPQSVPQPQ). Arg-974 is modified (omega-N-methylarginine). 21 tandem repeats follow at residues 977-978 (PQ), 979-980 (AQ), 981-982 (AQ), 983-984 (PQ), 985-986 (PQ), 987-988 (PQ), 989-990 (PQ), 991-992 (PQ), 993-994 (PQ), 995-996 (PQ), 997-998 (PQ), 999-1000 (PQ), 1001-1002 (PQ), 1003-1004 (PQ), 1005-1006 (SQ), 1007-1008 (SQ), 1009-1010 (PQ), 1011-1012 (PQ), 1013-1014 (PQ), 1015-1016 (PQ), and 1017-1018 (PQ). Residues 977–1018 (PQAQAQPQPQPQPQPQPQPQPQPQPQPQSQSQPQPQPQPQPQ) form a 21 X 2 AA approximate tandem repeats of P-Q region. Positions 984-1002 (QPQPQPQPQPQPQPQPQPQ) are enriched in pro residues. 2 stretches are compositionally biased toward pro residues: residues 1093 to 1102 (FPSPGPPHPH) and 1127 to 1165 (GPPPASQPTPSPHLVPSPAPSPGPGPVPSRPPTAEPPPC). Phosphoserine is present on residues Ser-1178 and Ser-1179. Phosphothreonine is present on Thr-1187. Residues 1248–1508 (DAIWRELQEA…KFCHEALVRH (261 aa)) form the Tyrosine-protein phosphatase domain. Cys-1448 serves as the catalytic Phosphocysteine intermediate. A disordered region spans residues 1574–1638 (ASLPGLVEPP…PSSSLELLAS (65 aa)). A compositionally biased stretch (pro residues) spans 1598 to 1612 (SSSPPPLSSPLPEAP). Residues 1620–1638 (VPEAPSLGPPSSSLELLAS) show a composition bias toward low complexity. Omega-N-methylarginine is present on Arg-1671.

This sequence belongs to the protein-tyrosine phosphatase family. Non-receptor class subfamily. In terms of assembly, interacts with GRAP2 and GRB2. Interacts with UBAP1 and CHMP4B.

It is found in the nucleus. It localises to the cytoplasm. The protein resides in the cytoplasmic vesicle. Its subcellular location is the endosome. The protein localises to the cytoskeleton. It is found in the cilium basal body. It carries out the reaction O-phospho-L-tyrosyl-[protein] + H2O = L-tyrosyl-[protein] + phosphate. Its function is as follows. Plays a role in sorting of endocytic ubiquitinated cargos into multivesicular bodies (MVBs) via its interaction with the ESCRT-I complex (endosomal sorting complex required for transport I), and possibly also other ESCRT complexes. May act as a negative regulator of Ras-mediated mitogenic activity. Plays a role in ciliogenesis. The polypeptide is Tyrosine-protein phosphatase non-receptor type 23 (Ptpn23) (Mus musculus (Mouse)).